The chain runs to 176 residues: Disulfide bond formation protein B (176 aa).

Residues 1–14 (MLRFLNQCSRGRGA) are Cytoplasmic-facing. A helical membrane pass occupies residues 15-31 (WLLMAFTALALEMVALW). Residues 32–49 (FQHVMLLKPCVLCIYERC) lie on the Periplasmic side of the membrane. The cysteines at positions 41 and 44 are disulfide-linked. A helical membrane pass occupies residues 50-65 (ALFGVMGAGLVGAIAP). Residues 66-71 (KTPLRY) are Cytoplasmic-facing. Residues 72–89 (VAMVIWIYSAWRGLQLAY) form a helical membrane-spanning segment. Topologically, residues 90–144 (EHTMIQLHPSPFMTCDFMARFPDWLPLGKWLPQVFVASGDCAERQWSFLTLEMPQ) are periplasmic. Cys104 and Cys130 form a disulfide bridge. The helical transmembrane segment at 145–163 (WLLGIFAAYLVVAIAVVIA) threads the bilayer. Over 164-176 (QAFKPKKRDLFGR) the chain is Cytoplasmic.

Belongs to the DsbB family.

The protein localises to the cell inner membrane. Required for disulfide bond formation in some periplasmic proteins. Acts by oxidizing the DsbA protein. This chain is Disulfide bond formation protein B, found in Salmonella paratyphi A (strain ATCC 9150 / SARB42).